A 586-amino-acid polypeptide reads, in one-letter code: Aspartate--tRNA ligase (586 aa).

E171 provides a ligand contact to L-aspartate. The interval 195-198 (QLFK) is aspartate. R217 contacts L-aspartate. Residues 217–219 (RDE) and Q226 contribute to the ATP site. Residue H448 coordinates L-aspartate. E482 is a binding site for ATP. R489 serves as a coordination point for L-aspartate. 534–537 (GLDR) lines the ATP pocket.

This sequence belongs to the class-II aminoacyl-tRNA synthetase family. Type 1 subfamily. As to quaternary structure, homodimer.

It is found in the cytoplasm. It carries out the reaction tRNA(Asp) + L-aspartate + ATP = L-aspartyl-tRNA(Asp) + AMP + diphosphate. Catalyzes the attachment of L-aspartate to tRNA(Asp) in a two-step reaction: L-aspartate is first activated by ATP to form Asp-AMP and then transferred to the acceptor end of tRNA(Asp). This is Aspartate--tRNA ligase from Buchnera aphidicola subsp. Acyrthosiphon pisum (strain 5A).